Reading from the N-terminus, the 630-residue chain is tRNA uridine 5-carboxymethylaminomethyl modification enzyme MnmG (630 aa).

Residue 13-18 (GGGHAG) coordinates FAD. An NAD(+)-binding site is contributed by 273–287 (GPRYCPSIEDKIHRF).

It belongs to the MnmG family. In terms of assembly, homodimer. Heterotetramer of two MnmE and two MnmG subunits. It depends on FAD as a cofactor.

The protein resides in the cytoplasm. In terms of biological role, NAD-binding protein involved in the addition of a carboxymethylaminomethyl (cmnm) group at the wobble position (U34) of certain tRNAs, forming tRNA-cmnm(5)s(2)U34. This chain is tRNA uridine 5-carboxymethylaminomethyl modification enzyme MnmG, found in Pseudomonas entomophila (strain L48).